Consider the following 448-residue polypeptide: Phosphoglucosamine mutase (448 aa).

Residue Ser100 is the Phosphoserine intermediate of the active site. Mg(2+) contacts are provided by Ser100, Asp240, Asp242, and Asp244. Position 100 is a phosphoserine (Ser100).

This sequence belongs to the phosphohexose mutase family. Requires Mg(2+) as cofactor. In terms of processing, activated by phosphorylation.

The catalysed reaction is alpha-D-glucosamine 1-phosphate = D-glucosamine 6-phosphate. Functionally, catalyzes the conversion of glucosamine-6-phosphate to glucosamine-1-phosphate. In Geobacillus thermodenitrificans (strain NG80-2), this protein is Phosphoglucosamine mutase.